A 164-amino-acid chain; its full sequence is Terminase, small subunit (164 aa).

The interval 1 to 35 (MEGLDINKLLDISDLPGIDGEEIKVYEPLQLVEVK) is helix-turn-helix (HTH). Residues 1 to 35 (MEGLDINKLLDISDLPGIDGEEIKVYEPLQLVEVK) form an interaction with gp17 region. The tract at residues 36–114 (SNPQNRTPDL…KDMKDITSEQ (79 aa)) is oligomerization. The interaction with gp17 stretch occupies residues 115-164 (VGTKGAVPTGQMNIQNATVFMGSPTELMDEIGDAYEAQEAREKVINGTTD).

As to quaternary structure, homooctamer. Interacts with the terminase large subunit gp17; the active complex is probably heterooligomeric.

Its function is as follows. The terminase small subunit binds to the packaging initiation site and regulates the ATPase activity of the terminase large subunit. The terminase lies at a unique vertex of the procapsid and is composed of two subunits, a small terminase subunit involved in viral DNA recognition (packaging 'pac' sequence), and a large terminase subunit possessing endonucleolytic and ATPase activities. Both terminase subunits heterooligomerize and are docked on the portal protein to form the packaging machine. The terminase large subunit exhibits endonuclease activity and cleaves the viral genome concatemer once the capsid is full (headful packaging). Once the capsid is packaged with the DNA, the terminase complex is substituted by neck proteins. In Enterobacteria phage T4 (Bacteriophage T4), this protein is Terminase, small subunit (16).